The following is a 366-amino-acid chain: Carbamoyl phosphate synthase small chain (366 aa).

The segment at 1–171 is CPSase; it reads MLERRYLVLE…KTPYVSTGSD (171 aa). The L-glutamine site is built by serine 47, glycine 221, and glycine 223. Residues 173-360 enclose the Glutamine amidotransferase type-1 domain; that stretch reads SVVLLDFGKK…MTMMKEFKEK (188 aa). Catalysis depends on cysteine 248, which acts as the Nucleophile. L-glutamine-binding residues include leucine 249, glutamine 252, asparagine 290, glycine 292, and tyrosine 293. Catalysis depends on residues histidine 333 and glutamate 335.

The protein belongs to the CarA family. Composed of two chains; the small (or glutamine) chain promotes the hydrolysis of glutamine to ammonia, which is used by the large (or ammonia) chain to synthesize carbamoyl phosphate. Tetramer of heterodimers (alpha,beta)4.

It carries out the reaction hydrogencarbonate + L-glutamine + 2 ATP + H2O = carbamoyl phosphate + L-glutamate + 2 ADP + phosphate + 2 H(+). The catalysed reaction is L-glutamine + H2O = L-glutamate + NH4(+). It participates in amino-acid biosynthesis; L-arginine biosynthesis; carbamoyl phosphate from bicarbonate: step 1/1. Its pathway is pyrimidine metabolism; UMP biosynthesis via de novo pathway; (S)-dihydroorotate from bicarbonate: step 1/3. In terms of biological role, small subunit of the glutamine-dependent carbamoyl phosphate synthetase (CPSase). CPSase catalyzes the formation of carbamoyl phosphate from the ammonia moiety of glutamine, carbonate, and phosphate donated by ATP, constituting the first step of 2 biosynthetic pathways, one leading to arginine and/or urea and the other to pyrimidine nucleotides. The small subunit (glutamine amidotransferase) binds and cleaves glutamine to supply the large subunit with the substrate ammonia. The polypeptide is Carbamoyl phosphate synthase small chain (Staphylococcus haemolyticus (strain JCSC1435)).